The primary structure comprises 246 residues: DNA polymerase sliding clamp 3 (246 aa).

Belongs to the PCNA family. The subunits circularize to form a toroid; DNA passes through its center. Replication factor C (RFC) is required to load the toroid on the DNA. Forms dimeric complexes with PCNA1 and PCNA2, and trimeric complexes with PCNA123 and PCNA323; does not form homotrimers. Crystal structures show a heterotetramer of 2 PCNA2 and 2 PCNA3, which would be large enough to clamp a Holliday junction.

Its function is as follows. Sliding clamp subunit that acts as a moving platform for DNA processing. Responsible for tethering the catalytic subunit of DNA polymerase and other proteins to DNA during high-speed replication. Both trimeric complexes inhibit DNA ligase and both 3'-5' and 5'-3' activity of Hel308 (Hjm) helicase, but stimulate Hjc, the Holliday junction cleavage enzyme. This chain is DNA polymerase sliding clamp 3, found in Sulfurisphaera tokodaii (strain DSM 16993 / JCM 10545 / NBRC 100140 / 7) (Sulfolobus tokodaii).